Reading from the N-terminus, the 423-residue chain is MTLQAAPRSAAAQQREPDLRQEVHDAARRARVAARLLAVVPTGVKDRALHAAADAILAHVDRILSANAEDLDAARAADTPAAMLDRLALNPQRVDGIAAGLRQVAGLPGPVGEVLRGYTLPNGLQLRQQRVPLGVVGMIYEGRPNVTVDAFGLTLKSGNAALLRGSSSAARSNEALVNVLRSALDSEQLPADAVQLLSSADRSTVTHLIQARGLVDVAIPRGGAGLIDAVVRDAQVPTIETGVGNCHVYVHEAADLDVAERILLNSKTRRPSVCNAAETLLVDAAIAEHAMPRLIGALQDAGVTVHLDADEQDLRREYLAMEIAVAVVDGVDGAIAHINEYGTGHTEAIVTTNLAAAQRFTERIDAAAVMVNASTAFTDGEQFGFGAEIGISTQKLHARGPMGLPELTSTKWIVRGEGHTRPA.

Residues 1–14 (MTLQAAPRSAAAQQ) are compositionally biased toward low complexity. Residues 1 to 25 (MTLQAAPRSAAAQQREPDLRQEVHD) form a disordered region. The segment covering 15–25 (REPDLRQEVHD) has biased composition (basic and acidic residues).

It belongs to the gamma-glutamyl phosphate reductase family.

Its subcellular location is the cytoplasm. It carries out the reaction L-glutamate 5-semialdehyde + phosphate + NADP(+) = L-glutamyl 5-phosphate + NADPH + H(+). It participates in amino-acid biosynthesis; L-proline biosynthesis; L-glutamate 5-semialdehyde from L-glutamate: step 2/2. Its function is as follows. Catalyzes the NADPH-dependent reduction of L-glutamate 5-phosphate into L-glutamate 5-semialdehyde and phosphate. The product spontaneously undergoes cyclization to form 1-pyrroline-5-carboxylate. This chain is Gamma-glutamyl phosphate reductase, found in Mycobacterium ulcerans (strain Agy99).